The chain runs to 245 residues: Tetraspanin-16 (245 aa).

Over 1-13 (MAEIHTPYSSLKK) the chain is Cytoplasmic. A helical membrane pass occupies residues 14–34 (LLSLLNGFVAVSGIILVGLGI). At 35-37 (GGK) the chain is on the extracellular side. The helical transmembrane segment at 38 to 58 (CGGASLTNVLGLSSAYLLHVG) threads the bilayer. A topological domain (cytoplasmic) is located at residue asparagine 59. The helical transmembrane segment at 60 to 80 (LCLVMGCITVLLGCAGWYGAT) threads the bilayer. The Extracellular segment spans residues 81 to 94 (KESRGTLLFCILSM). Residues 95–115 (VIVLIMEVTAATVVLLFFPIV) traverse the membrane as a helical segment. The Cytoplasmic segment spans residues 116 to 245 (GDVALEHTFV…VAQAGLELLA (130 aa)).

It belongs to the tetraspanin (TM4SF) family. As to expression, broadly expressed in most human tissues and cell lines including neural and bone marrow derived tissues.

It localises to the membrane. The protein is Tetraspanin-16 (TSPAN16) of Homo sapiens (Human).